The following is a 451-amino-acid chain: Exodeoxyribonuclease 7 large subunit (451 aa).

Belongs to the XseA family. Heterooligomer composed of large and small subunits.

Its subcellular location is the cytoplasm. It catalyses the reaction Exonucleolytic cleavage in either 5'- to 3'- or 3'- to 5'-direction to yield nucleoside 5'-phosphates.. Its function is as follows. Bidirectionally degrades single-stranded DNA into large acid-insoluble oligonucleotides, which are then degraded further into small acid-soluble oligonucleotides. In Neisseria meningitidis serogroup C / serotype 2a (strain ATCC 700532 / DSM 15464 / FAM18), this protein is Exodeoxyribonuclease 7 large subunit.